A 158-amino-acid chain; its full sequence is 3-dehydroquinate dehydratase (158 aa).

Tyr-22 serves as the catalytic Proton acceptor. Residues Asn-74, His-80, and Asp-87 each contribute to the substrate site. The active-site Proton donor is the His-100. Substrate-binding positions include 101–102 (IS) and Arg-111.

This sequence belongs to the type-II 3-dehydroquinase family. In terms of assembly, homododecamer.

The catalysed reaction is 3-dehydroquinate = 3-dehydroshikimate + H2O. It participates in metabolic intermediate biosynthesis; chorismate biosynthesis; chorismate from D-erythrose 4-phosphate and phosphoenolpyruvate: step 3/7. Functionally, catalyzes a trans-dehydration via an enolate intermediate. The protein is 3-dehydroquinate dehydratase of Helicobacter hepaticus (strain ATCC 51449 / 3B1).